Here is a 98-residue protein sequence, read N- to C-terminus: NADH-ubiquinone oxidoreductase chain 4L (98 aa).

3 consecutive transmembrane segments (helical) span residues P2–F22, S29–L49, and I61–V81.

Belongs to the complex I subunit 4L family. As to quaternary structure, core subunit of respiratory chain NADH dehydrogenase (Complex I) which is composed of 45 different subunits.

Its subcellular location is the mitochondrion inner membrane. It catalyses the reaction a ubiquinone + NADH + 5 H(+)(in) = a ubiquinol + NAD(+) + 4 H(+)(out). Core subunit of the mitochondrial membrane respiratory chain NADH dehydrogenase (Complex I) which catalyzes electron transfer from NADH through the respiratory chain, using ubiquinone as an electron acceptor. Part of the enzyme membrane arm which is embedded in the lipid bilayer and involved in proton translocation. This is NADH-ubiquinone oxidoreductase chain 4L (MT-ND4L) from Propithecus diadema diadema (Diademed sifaka).